We begin with the raw amino-acid sequence, 320 residues long: Ribosomal large subunit pseudouridine synthase D (320 aa).

The S4 RNA-binding domain maps to 18–90 (QRLDQIAAQL…IELEIVYEDE (73 aa)). Asp-138 is an active-site residue.

Belongs to the pseudouridine synthase RluA family.

It is found in the cytoplasm. The catalysed reaction is uridine(1911/1915/1917) in 23S rRNA = pseudouridine(1911/1915/1917) in 23S rRNA. Functionally, responsible for synthesis of pseudouridine from uracil at positions 1911, 1915 and 1917 in 23S ribosomal RNA. This chain is Ribosomal large subunit pseudouridine synthase D (rluD), found in Pseudomonas aeruginosa (strain ATCC 15692 / DSM 22644 / CIP 104116 / JCM 14847 / LMG 12228 / 1C / PRS 101 / PAO1).